The following is a 315-amino-acid chain: Putative quercetin 2,3-dioxygenase PA1205 (315 aa).

A divalent metal cation contacts are provided by His77, His79, His121, and Glu123.

The protein belongs to the pirin family. A divalent metal cation serves as cofactor.

The catalysed reaction is quercetin + O2 = 2-(3,4-dihydroxybenzoyloxy)-4,6-dihydroxybenzoate + CO. Its pathway is flavonoid metabolism; quercetin degradation. In terms of biological role, putative quercetin 2,3-dioxygenase. This is Putative quercetin 2,3-dioxygenase PA1205 from Pseudomonas aeruginosa (strain ATCC 15692 / DSM 22644 / CIP 104116 / JCM 14847 / LMG 12228 / 1C / PRS 101 / PAO1).